Reading from the N-terminus, the 374-residue chain is Chaperone protein DnaJ (374 aa).

A J domain is found at 5–69 (NYYQILGVSK…QKRAAYDRLG (65 aa)). Residues 137-215 (GIEKNISFSS…CHGMGRYHKQ (79 aa)) form a CR-type zinc finger. Zn(2+) is bound by residues C150, C153, C167, C170, C189, C192, C203, and C206. 4 CXXCXGXG motif repeats span residues 150–157 (CDTCHGSG), 167–174 (CDACSGVG), 189–196 (CHKCQGNG), and 203–210 (CKKCHGMG).

It belongs to the DnaJ family. In terms of assembly, homodimer. Zn(2+) serves as cofactor.

It localises to the cytoplasm. In terms of biological role, participates actively in the response to hyperosmotic and heat shock by preventing the aggregation of stress-denatured proteins and by disaggregating proteins, also in an autonomous, DnaK-independent fashion. Unfolded proteins bind initially to DnaJ; upon interaction with the DnaJ-bound protein, DnaK hydrolyzes its bound ATP, resulting in the formation of a stable complex. GrpE releases ADP from DnaK; ATP binding to DnaK triggers the release of the substrate protein, thus completing the reaction cycle. Several rounds of ATP-dependent interactions between DnaJ, DnaK and GrpE are required for fully efficient folding. Also involved, together with DnaK and GrpE, in the DNA replication of plasmids through activation of initiation proteins. The chain is Chaperone protein DnaJ from Rickettsia massiliae (strain Mtu5).